The primary structure comprises 117 residues: Immunoglobulin heavy variable 4-28 (117 aa).

Positions 1 to 19 are cleaved as a signal peptide; the sequence is MKHLWFFLLLVAAPRWVLS. Residues 20–44 form a framework-1 region; the sequence is QVQLQESGPGLVKPSDTLSLTCAVS. Residues 20–117 enclose the Ig-like domain; it reads QVQLQESGPG…VDTAVYYCAR (98 aa). A disulfide bond links Cys41 and Cys115. The tract at residues 45 to 53 is complementarity-determining-1; that stretch reads GYSISSSNW. A framework-2 region spans residues 54-70; that stretch reads WGWIRQPPGKGLEWIGY. Positions 71-77 are complementarity-determining-2; it reads IYYSGST. The interval 78–115 is framework-3; the sequence is YYNPSLKSRVTMSVDTSKNQFSLKLSSVTAVDTAVYYC. A complementarity-determining-3 region spans residues 116–117; that stretch reads AR.

As to quaternary structure, immunoglobulins are composed of two identical heavy chains and two identical light chains; disulfide-linked.

Its subcellular location is the secreted. It is found in the cell membrane. Its function is as follows. V region of the variable domain of immunoglobulin heavy chains that participates in the antigen recognition. Immunoglobulins, also known as antibodies, are membrane-bound or secreted glycoproteins produced by B lymphocytes. In the recognition phase of humoral immunity, the membrane-bound immunoglobulins serve as receptors which, upon binding of a specific antigen, trigger the clonal expansion and differentiation of B lymphocytes into immunoglobulins-secreting plasma cells. Secreted immunoglobulins mediate the effector phase of humoral immunity, which results in the elimination of bound antigens. The antigen binding site is formed by the variable domain of one heavy chain, together with that of its associated light chain. Thus, each immunoglobulin has two antigen binding sites with remarkable affinity for a particular antigen. The variable domains are assembled by a process called V-(D)-J rearrangement and can then be subjected to somatic hypermutations which, after exposure to antigen and selection, allow affinity maturation for a particular antigen. The chain is Immunoglobulin heavy variable 4-28 from Homo sapiens (Human).